Reading from the N-terminus, the 373-residue chain is Mannitol-1-phosphate 5-dehydrogenase (373 aa).

3 to 14 (ALHFGAGNIGRG) serves as a coordination point for NAD(+).

It belongs to the mannitol dehydrogenase family.

It catalyses the reaction D-mannitol 1-phosphate + NAD(+) = beta-D-fructose 6-phosphate + NADH + H(+). This is Mannitol-1-phosphate 5-dehydrogenase (mtlD) from Bacillus subtilis (strain 168).